Consider the following 290-residue polypeptide: Sodium/potassium-transporting ATPase subunit beta-2 (290 aa).

Topologically, residues 1 to 39 (MVIQKEKKSCGQVVEEWKEFVWNPRTHQFMGRTGTSWAF) are cytoplasmic. Residues 40–67 (ILLFYLVFYGFLTAMFTLTMWVMLQTVS) traverse the membrane as a helical; Signal-anchor for type II membrane protein segment. Over 68–290 (DHTPKYQDRL…VAFKLRINKT (223 aa)) the chain is Extracellular. 2 N-linked (GlcNAc...) asparagine glycosylation sites follow: asparagine 96 and asparagine 118. An intrachain disulfide couples cysteine 129 to cysteine 150. N-linked (GlcNAc...) asparagine glycans are attached at residues asparagine 153 and asparagine 159. Cysteine 160 and cysteine 177 are joined by a disulfide. N-linked (GlcNAc...) asparagine glycans are attached at residues asparagine 193, asparagine 197, and asparagine 238. The segment at 193-290 (NQSMNVTCAG…VAFKLRINKT (98 aa)) is immunoglobulin-like. Cysteines 200 and 261 form a disulfide.

It belongs to the X(+)/potassium ATPases subunit beta family. As to quaternary structure, the sodium/potassium-transporting ATPase is composed of a catalytic alpha subunit, an auxiliary non-catalytic beta subunit and an additional regulatory subunit. Interacts with isoform 2 of BSG.

Its subcellular location is the cell membrane. Functionally, this is the non-catalytic component of the active enzyme, which catalyzes the hydrolysis of ATP coupled with the exchange of Na(+) and K(+) ions across the plasma membrane. The exact function of the beta-2 subunit is not known. In terms of biological role, mediates cell adhesion of neurons and astrocytes, and promotes neurite outgrowth. This chain is Sodium/potassium-transporting ATPase subunit beta-2 (ATP1B2), found in Homo sapiens (Human).